We begin with the raw amino-acid sequence, 249 residues long: 2,3-bisphosphoglycerate-dependent phosphoglycerate mutase (249 aa).

Substrate is bound by residues 9 to 16, 22 to 23, R61, 88 to 91, K99, 115 to 116, and 184 to 185; these read RHGESEWN, TG, ERHY, RR, and GN. Catalysis depends on H10, which acts as the Tele-phosphohistidine intermediate. Catalysis depends on E88, which acts as the Proton donor/acceptor.

The protein belongs to the phosphoglycerate mutase family. BPG-dependent PGAM subfamily.

It carries out the reaction (2R)-2-phosphoglycerate = (2R)-3-phosphoglycerate. The protein operates within carbohydrate degradation; glycolysis; pyruvate from D-glyceraldehyde 3-phosphate: step 3/5. Catalyzes the interconversion of 2-phosphoglycerate and 3-phosphoglycerate. The sequence is that of 2,3-bisphosphoglycerate-dependent phosphoglycerate mutase from Cutibacterium acnes (strain DSM 16379 / KPA171202) (Propionibacterium acnes).